An 85-amino-acid polypeptide reads, in one-letter code: uncharacterized protein (85 aa).

Belongs to the BolA/IbaG family.

This is an uncharacterized protein from Haemophilus influenzae (strain ATCC 51907 / DSM 11121 / KW20 / Rd).